A 348-amino-acid polypeptide reads, in one-letter code: Uroporphyrinogen decarboxylase (348 aa).

Substrate contacts are provided by residues 29 to 33, Asp79, Tyr155, Thr210, and His326; that span reads RQAGR.

The protein belongs to the uroporphyrinogen decarboxylase family. Homodimer.

The protein resides in the cytoplasm. The catalysed reaction is uroporphyrinogen III + 4 H(+) = coproporphyrinogen III + 4 CO2. The protein operates within porphyrin-containing compound metabolism; protoporphyrin-IX biosynthesis; coproporphyrinogen-III from 5-aminolevulinate: step 4/4. Catalyzes the decarboxylation of four acetate groups of uroporphyrinogen-III to yield coproporphyrinogen-III. This Rhodospirillum rubrum (strain ATCC 11170 / ATH 1.1.1 / DSM 467 / LMG 4362 / NCIMB 8255 / S1) protein is Uroporphyrinogen decarboxylase.